Consider the following 301-residue polypeptide: uncharacterized protein (301 aa).

The Extracellular portion of the chain corresponds to 1–5; it reads MSYKK. A helical membrane pass occupies residues 6 to 26; that stretch reads FVYFINLFFLLGATLLTFFLI. Topologically, residues 27 to 112 are cytoplasmic; sequence LAGGRTTGVL…NRNAYYYLSR (86 aa). The helical transmembrane segment at 113-133 threads the bilayer; the sequence is VGWAMLLIGLFFLLITLVSVI. At 134–143 the chain is on the extracellular side; that stretch reads ASLIRYNRRT. Residues 144-164 form a helical membrane-spanning segment; sequence AALATAMSWITLFFITLSACL. The Cytoplasmic portion of the chain corresponds to 165-191; sequence YTGCYAKAVKAFHHENRDARLGPKNFG. A helical membrane pass occupies residues 192–212; that stretch reads LIWTTVFLLIVNAICCTIMVA. The Extracellular portion of the chain corresponds to 213 to 301; that stretch reads THKRNEYIYD…YTEQNVPVVS (89 aa). The segment at 254-301 is disordered; it reads VQQSQSHQNHRFFKKLRTKKRTVTSAGDEPDRVQEERVYTEQNVPVVS. Residues 261-275 show a composition bias toward basic residues; that stretch reads QNHRFFKKLRTKKRT. The span at 282–292 shows a compositional bias: basic and acidic residues; the sequence is EPDRVQEERVY.

This sequence belongs to the SUR7 family.

The protein localises to the cell membrane. Its function is as follows. Involved in sporulation and affects the sphingolipid composition of the plasma membrane. This is an uncharacterized protein from Saccharomyces cerevisiae (strain ATCC 204508 / S288c) (Baker's yeast).